The chain runs to 88 residues: Homeobox protein knotted-1-like 11 (88 aa).

The 21-residue stretch at 4-24 folds into the ELK domain; the sequence is ELKEMLLKKYSGCLSRLRSEF. The segment at residues 25-88 is a DNA-binding region (homeobox; TALE-type); that stretch reads LKKRKKGKLP…NQRKRHWKPS (64 aa).

The protein belongs to the TALE/KNOX homeobox family.

Its subcellular location is the nucleus. Probably binds to the DNA sequence 5'-TGAC-3'. In Zea mays (Maize), this protein is Homeobox protein knotted-1-like 11 (KNOX11).